Consider the following 563-residue polypeptide: Arginine--tRNA ligase (563 aa).

A 'HIGH' region motif is present at residues 134–144; that stretch reads ANPTGLLHMGN.

This sequence belongs to the class-I aminoacyl-tRNA synthetase family. As to quaternary structure, monomer.

It is found in the cytoplasm. The catalysed reaction is tRNA(Arg) + L-arginine + ATP = L-arginyl-tRNA(Arg) + AMP + diphosphate. This chain is Arginine--tRNA ligase, found in Heliobacterium modesticaldum (strain ATCC 51547 / Ice1).